Here is a 147-residue protein sequence, read N- to C-terminus: Protein-export protein SecB (147 aa).

It belongs to the SecB family. In terms of assembly, homotetramer, a dimer of dimers. One homotetramer interacts with 1 SecA dimer.

The protein localises to the cytoplasm. Functionally, one of the proteins required for the normal export of preproteins out of the cell cytoplasm. It is a molecular chaperone that binds to a subset of precursor proteins, maintaining them in a translocation-competent state. It also specifically binds to its receptor SecA. The chain is Protein-export protein SecB from Neisseria meningitidis serogroup B (strain ATCC BAA-335 / MC58).